Reading from the N-terminus, the 358-residue chain is Type II methyltransferase M.HpaII (358 aa).

The region spanning 32 to 356 (FTFIDLFAGI…KKILEKLGNL (325 aa)) is the SAM-dependent MTase C5-type domain. Cys-103 is an active-site residue.

This sequence belongs to the class I-like SAM-binding methyltransferase superfamily. C5-methyltransferase family. As to quaternary structure, monomer.

It carries out the reaction a 2'-deoxycytidine in DNA + S-adenosyl-L-methionine = a 5-methyl-2'-deoxycytidine in DNA + S-adenosyl-L-homocysteine + H(+). In terms of biological role, a methylase that recognizes the double-stranded sequence 5'-CCGG-3', methylates C-2 on both strands, and protects the DNA from cleavage by the HpaII endonuclease. The polypeptide is Type II methyltransferase M.HpaII (Haemophilus parainfluenzae).